The following is a 235-amino-acid chain: uncharacterized protein (235 aa).

To E.coli YbeU.

This is an uncharacterized protein from Escherichia coli (strain K12).